Here is a 187-residue protein sequence, read N- to C-terminus: UPF0301 protein Sbal195_3177 (187 aa).

This sequence belongs to the UPF0301 (AlgH) family.

In Shewanella baltica (strain OS195), this protein is UPF0301 protein Sbal195_3177.